A 1172-amino-acid polypeptide reads, in one-letter code: Laminin subunit beta-3 (1172 aa).

The first 17 residues, M1 to A17, serve as a signal peptide directing secretion. Residues S22 to S249 form the Laminin N-terminal domain. N220 carries an N-linked (GlcNAc...) asparagine glycan. 24 disulfides stabilise this stretch: C250/C259, C252/C279, C281/C290, C293/C313, C316/C325, C318/C343, C346/C355, C358/C376, C379/C392, C381/C399, C401/C410, C413/C428, C431/C444, C433/C451, C453/C462, C465/C478, C481/C493, C483/C500, C502/C511, C519/C531, C534/C546, C536/C553, C555/C564, and C567/C578. 6 consecutive Laminin EGF-like domains span residues C250–R315, C316–S378, C379–R430, C431–P480, C481–A533, and C534–A580. The segment at V579 to N785 is domain II. N604 carries N-linked (GlcNAc...) asparagine glycosylation. The stretch at E723–G757 forms a coiled coil. Residues K786–S816 are domain alpha. A glycan (N-linked (GlcNAc...) asparagine) is linked at N810. The domain I stretch occupies residues R817–T1170. Coiled coils occupy residues M831–D884 and V948–L1133.

As to quaternary structure, laminin is a complex glycoprotein, consisting of three different polypeptide chains (alpha, beta, gamma), which are bound to each other by disulfide bonds into a cross-shaped molecule comprising one long and three short arms with globules at each end. Beta-3 is a subunit of laminin-5 (laminin-332 or epiligrin/kalinin/nicein). Interacts with ECM1. As to expression, found in the basement membranes (major component).

It localises to the secreted. The protein localises to the extracellular space. It is found in the extracellular matrix. Its subcellular location is the basement membrane. In terms of biological role, binding to cells via a high affinity receptor, laminin is thought to mediate the attachment, migration and organization of cells into tissues during embryonic development by interacting with other extracellular matrix components. This is Laminin subunit beta-3 (LAMB3) from Homo sapiens (Human).